Here is a 471-residue protein sequence, read N- to C-terminus: 3-isopropylmalate dehydratase large subunit (471 aa).

Positions 349, 409, and 412 each coordinate [4Fe-4S] cluster.

The protein belongs to the aconitase/IPM isomerase family. LeuC type 1 subfamily. Heterodimer of LeuC and LeuD. The cofactor is [4Fe-4S] cluster.

It carries out the reaction (2R,3S)-3-isopropylmalate = (2S)-2-isopropylmalate. It functions in the pathway amino-acid biosynthesis; L-leucine biosynthesis; L-leucine from 3-methyl-2-oxobutanoate: step 2/4. Its function is as follows. Catalyzes the isomerization between 2-isopropylmalate and 3-isopropylmalate, via the formation of 2-isopropylmaleate. The chain is 3-isopropylmalate dehydratase large subunit from Aliivibrio fischeri (strain ATCC 700601 / ES114) (Vibrio fischeri).